The following is a 148-amino-acid chain: Large ribosomal subunit protein uL15 (148 aa).

The disordered stretch occupies residues 18–38 (GYGRVGKHRKHPGGRGNAGGL).

It belongs to the universal ribosomal protein uL15 family.

The sequence is that of Large ribosomal subunit protein uL15 (rpl27a) from Dictyostelium discoideum (Social amoeba).